Reading from the N-terminus, the 123-residue chain is Fluoride-specific ion channel FluC 1 (123 aa).

Helical transmembrane passes span 1–21, 34–54, 59–79, and 99–119; these read MVDLLLIGLGGSIGAILRYTL, PLATFLINIIGSFGLGLLYGF, VIWLLLGTGFFGGFTTFSTYI, and LTSIFTGVVFFAAGMWLANFF. Positions 70 and 73 each coordinate Na(+).

This sequence belongs to the fluoride channel Fluc/FEX (TC 1.A.43) family.

It is found in the cell membrane. The catalysed reaction is fluoride(in) = fluoride(out). Its activity is regulated as follows. Na(+) is not transported, but it plays an essential structural role and its presence is essential for fluoride channel function. Its function is as follows. Fluoride-specific ion channel. Important for reducing fluoride concentration in the cell, thus reducing its toxicity. This is Fluoride-specific ion channel FluC 1 from Carboxydothermus hydrogenoformans (strain ATCC BAA-161 / DSM 6008 / Z-2901).